The sequence spans 919 residues: Isoleucine--tRNA ligase (919 aa).

A 'HIGH' region motif is present at residues 57–67 (PYANGDIHMGT). L-isoleucyl-5'-AMP is bound at residue E552. Residues 593–597 (KMSKS) carry the 'KMSKS' region motif. K596 is an ATP binding site. Zn(2+)-binding residues include C886, C889, C906, and C909.

It belongs to the class-I aminoacyl-tRNA synthetase family. IleS type 1 subfamily. As to quaternary structure, monomer. Zn(2+) serves as cofactor.

The protein resides in the cytoplasm. It carries out the reaction tRNA(Ile) + L-isoleucine + ATP = L-isoleucyl-tRNA(Ile) + AMP + diphosphate. Its function is as follows. Catalyzes the attachment of isoleucine to tRNA(Ile). As IleRS can inadvertently accommodate and process structurally similar amino acids such as valine, to avoid such errors it has two additional distinct tRNA(Ile)-dependent editing activities. One activity is designated as 'pretransfer' editing and involves the hydrolysis of activated Val-AMP. The other activity is designated 'posttransfer' editing and involves deacylation of mischarged Val-tRNA(Ile). The chain is Isoleucine--tRNA ligase from Petrotoga mobilis (strain DSM 10674 / SJ95).